The chain runs to 477 residues: Glutamate--tRNA ligase (477 aa).

A 'HIGH' region motif is present at residues 18–28 (PSPTGFIHLGN). Residues 128 to 138 (PRYDGSWRPEP) show a composition bias toward basic and acidic residues. Residues 128–151 (PRYDGSWRPEPGKTLPPVPAGMSP) form a disordered region. Residues 250–254 (KLSKR) carry the 'KMSKS' region motif. ATP is bound at residue Lys-253.

This sequence belongs to the class-I aminoacyl-tRNA synthetase family. Glutamate--tRNA ligase type 1 subfamily. As to quaternary structure, monomer.

It localises to the cytoplasm. The catalysed reaction is tRNA(Glu) + L-glutamate + ATP = L-glutamyl-tRNA(Glu) + AMP + diphosphate. Its function is as follows. Catalyzes the attachment of glutamate to tRNA(Glu) in a two-step reaction: glutamate is first activated by ATP to form Glu-AMP and then transferred to the acceptor end of tRNA(Glu). The polypeptide is Glutamate--tRNA ligase (Verminephrobacter eiseniae (strain EF01-2)).